A 449-amino-acid chain; its full sequence is 1H-pyrrole-2-carbonyl-[peptidyl-carrier protein] chlorinase (449 aa).

FAD is bound by residues A16, E35, R41, H43, V44, S47, R123, I147, and D316. 2 residues coordinate chloride: S327 and G328. V329 serves as a coordination point for FAD.

The protein belongs to the flavin-dependent halogenase family. As to quaternary structure, homodimer.

The enzyme catalyses (1H-pyrrole-2-carbonyl)-[peptidyl-carrier protein] + 2 FADH2 + 2 chloride + 2 O2 = (4,5-dichloro-1H-pyrrole-2-carbonyl)-[peptidyl-carrier protein] + 2 FAD + 4 H2O. The catalysed reaction is (1H-pyrrole-2-carbonyl)-[peptidyl-carrier protein] + FADH2 + chloride + O2 = (5-chloro-1H-pyrrole-2-carbonyl)-[peptidyl-carrier protein] + FAD + 2 H2O. It catalyses the reaction (5-chloro-1H-pyrrole-2-carbonyl)-[peptidyl-carrier protein] + FADH2 + chloride + O2 = (4,5-dichloro-1H-pyrrole-2-carbonyl)-[peptidyl-carrier protein] + FAD + 2 H2O. It functions in the pathway antibiotic biosynthesis. Its function is as follows. Involved in the biosynthesis of the antibiotic pyoluteorin. Catalyzes the dichlorination of the pyrrole ring of pyrrolyl-S-PltL, generating the 5-chloropyrrolyl-S-PltL intermediate and then the 4,5-dichloropyrrolyl-S-PltL product. The chain is 1H-pyrrole-2-carbonyl-[peptidyl-carrier protein] chlorinase from Pseudomonas fluorescens (strain ATCC BAA-477 / NRRL B-23932 / Pf-5).